We begin with the raw amino-acid sequence, 446 residues long: Putative hydrolase YbfO (446 aa).

The first 28 residues, 1–28 (MKRMIVRMTLPLLIVCLAFSSFSASARA), serve as a signal peptide directing secretion.

This Bacillus subtilis (strain 168) protein is Putative hydrolase YbfO (ybfO).